Consider the following 605-residue polypeptide: Alpha-1,3-galactosidase A (605 aa).

Residues Met1–Ala20 form the signal peptide. 6 PbH1 repeats span residues Ser256–Tyr278, Lys312–Gly334, Thr421–Thr443, Pro444–Ala466, Val477–Asn507, and His517–Asn547.

It belongs to the glycosyl hydrolase 110 family. A subfamily.

The enzyme catalyses Hydrolysis of terminal, non-reducing branched (1-&gt;3)-alpha-D-galactosidic residues, producing free D-galactose.. It catalyses the reaction Hydrolysis of terminal, non-reducing alpha-D-galactose residues in alpha-D-galactosides, including galactose oligosaccharides, galactomannans and galactolipids.. In terms of biological role, alpha-galactosidase that specifically removes branched alpha-1,3-linked galactose residues present in blood group B antigens. Has no activity toward linear alpha-1,3-linked galactose residues. The sequence is that of Alpha-1,3-galactosidase A (glaA) from Bacteroides fragilis (strain YCH46).